The following is a 264-amino-acid chain: Thymidylate synthase (264 aa).

A dUMP-binding site is contributed by Arg-21. His-51 is a binding site for (6R)-5,10-methylene-5,6,7,8-tetrahydrofolate. 126–127 (RR) contacts dUMP. Cys-146 serves as the catalytic Nucleophile. DUMP contacts are provided by residues 166–169 (RSCD), Asn-177, and 207–209 (HLY). Asp-169 serves as a coordination point for (6R)-5,10-methylene-5,6,7,8-tetrahydrofolate. Ala-263 provides a ligand contact to (6R)-5,10-methylene-5,6,7,8-tetrahydrofolate.

Belongs to the thymidylate synthase family. Bacterial-type ThyA subfamily. In terms of assembly, homodimer.

The protein resides in the cytoplasm. The catalysed reaction is dUMP + (6R)-5,10-methylene-5,6,7,8-tetrahydrofolate = 7,8-dihydrofolate + dTMP. It functions in the pathway pyrimidine metabolism; dTTP biosynthesis. Catalyzes the reductive methylation of 2'-deoxyuridine-5'-monophosphate (dUMP) to 2'-deoxythymidine-5'-monophosphate (dTMP) while utilizing 5,10-methylenetetrahydrofolate (mTHF) as the methyl donor and reductant in the reaction, yielding dihydrofolate (DHF) as a by-product. This enzymatic reaction provides an intracellular de novo source of dTMP, an essential precursor for DNA biosynthesis. The chain is Thymidylate synthase from Citrobacter koseri (strain ATCC BAA-895 / CDC 4225-83 / SGSC4696).